The following is a 685-amino-acid chain: Polyphosphate kinase (685 aa).

Asparagine 45 contacts ATP. Mg(2+) contacts are provided by arginine 375 and arginine 405. Catalysis depends on histidine 435, which acts as the Phosphohistidine intermediate. 3 residues coordinate ATP: tyrosine 468, arginine 564, and histidine 592.

Belongs to the polyphosphate kinase 1 (PPK1) family. The cofactor is Mg(2+). Post-translationally, an intermediate of this reaction is the autophosphorylated ppk in which a phosphate is covalently linked to a histidine residue through a N-P bond.

The enzyme catalyses [phosphate](n) + ATP = [phosphate](n+1) + ADP. Its function is as follows. Catalyzes the reversible transfer of the terminal phosphate of ATP to form a long-chain polyphosphate (polyP). This is Polyphosphate kinase from Neisseria gonorrhoeae (strain ATCC 700825 / FA 1090).